The chain runs to 685 residues: Multisite-specific tRNA:(cytosine-C(5))-methyltransferase trm4b (685 aa).

Residues 167 to 173, Asp208, Asp235, and Asp270 each bind S-adenosyl-L-methionine; that span reads CAAPGSK. Catalysis depends on Cys323, which acts as the Nucleophile.

The protein belongs to the class I-like SAM-binding methyltransferase superfamily. RsmB/NOP family. TRM4 subfamily.

The protein localises to the nucleus. It catalyses the reaction cytidine(49) in tRNA precursor + S-adenosyl-L-methionine = 5-methylcytidine(49) in tRNA precursor + S-adenosyl-L-homocysteine + H(+). The catalysed reaction is cytidine(50) in tRNA + S-adenosyl-L-methionine = 5-methylcytidine(50) in tRNA + S-adenosyl-L-homocysteine + H(+). It carries out the reaction cytidine(60) in tRNA(Asp) + S-adenosyl-L-methionine = 5-methylcytidine(60) in tRNA(Asp) + S-adenosyl-L-homocysteine + H(+). The enzyme catalyses cytidine(61) in tRNA(Asp) + S-adenosyl-L-methionine = 5-methylcytidine(61) in tRNA(Asp) + S-adenosyl-L-homocysteine + H(+). It catalyses the reaction cytidine(62) in tRNA(Asp) + S-adenosyl-L-methionine = 5-methylcytidine(62) in tRNA(Asp) + S-adenosyl-L-homocysteine + H(+). Its function is as follows. tRNA cytosine C(5)-methyltransferase that methylates cytosine to 5-methylcytosine (m5C) in tRNAs at position 49 and 50. Trm4a and trm4b methylate different sets of tRNAs. Also methylates cytosine to m5C at positions (60, 61 and 62) in tRNA(Asp). This is Multisite-specific tRNA:(cytosine-C(5))-methyltransferase trm4b from Schizosaccharomyces pombe (strain 972 / ATCC 24843) (Fission yeast).